A 700-amino-acid polypeptide reads, in one-letter code: MLTDLHKVRNIGIMAHIDAGKTTTTERILFYTGVNHKLGETHDGASTTDWMEQEKERGITITSAAVTCFWNKNQINIIDTPGHVDFTVEVERSLRVLDGAVAVFDAKEGVEPQSETVWRQADKYVVPRICFVNKMDKLGADFYFTVDTIISRLGAKPLVMQLPIGSESEFIGVVDLIEMRALVWPGDAKGDVTMGAKYEVQEIPADLQAKAEEYRAKLVETVAESDDALLEKFFGGEELTVAEIKGAIRTMTVNNEIYPVLCGSAFKNRGVQPMLDAVIDYLPSPLDVPAIEAHDPRDEEKVILRHADATEPFSALAFKVAVHPFFGRLTYVRIYSGRVDSGAQVINSTKGRKERIGKIFQMHANKENPVDFVTAGNIYAVIGLKDTTTGDTLSDPANEVVLESMTFPEPVIEVAIEPKTKADQEKLGTAIQKLAEEDPTFRTEQNQETGQTVIKGMGELHLDILVDRMKREFNVEANVGKPQVAYRETLRRTVEKHDYTHKKQTGGSGQFAKVQITLEPLEVTPETSYEFVNAVTGGRVPREYIPSVDAGIQDAMQVGVLAGFPTVGVKATLVDGASHDVDSSEMAFKIAGSMAYKEAARKANPVLLEPLMAVEVRTPEEYMGDVIGDLNSRRGQIQSMEDASGVKVVKVNVPLSEMFGYIGDLRSKTSGRAVYSMQFDSYAEVPKAVADEIVQKSKGE.

Positions 6-286 constitute a tr-type G domain; the sequence is HKVRNIGIMA…AVIDYLPSPL (281 aa). GTP contacts are provided by residues 15–22, 79–83, and 133–136; these read AHIDAGKT, DTPGH, and NKMD.

The protein belongs to the TRAFAC class translation factor GTPase superfamily. Classic translation factor GTPase family. EF-G/EF-2 subfamily.

Its subcellular location is the cytoplasm. Catalyzes the GTP-dependent ribosomal translocation step during translation elongation. During this step, the ribosome changes from the pre-translocational (PRE) to the post-translocational (POST) state as the newly formed A-site-bound peptidyl-tRNA and P-site-bound deacylated tRNA move to the P and E sites, respectively. Catalyzes the coordinated movement of the two tRNA molecules, the mRNA and conformational changes in the ribosome. This is Elongation factor G from Leifsonia xyli subsp. xyli (strain CTCB07).